We begin with the raw amino-acid sequence, 469 residues long: Pancreatic lipase-related protein 2 (469 aa).

A signal peptide spans 1 to 17; sequence MLPSWTIGLLLLATVRG. A disulfide bridge connects residues cysteine 21 and cysteine 27. Asparagine 71 is a glycosylation site (N-linked (GlcNAc...) asparagine). Residues 93 to 105 form a required for galactolipase activity region; it reads IHGFIDDGDSGWP. Residues cysteine 109 and cysteine 120 are joined by a disulfide bond. The active-site Nucleophile is serine 171. Aspartate 195 acts as the Charge relay system in catalysis. Ca(2+) contacts are provided by glutamate 206, arginine 209, aspartate 211, and aspartate 214. Cysteine 256 and cysteine 280 are oxidised to a cystine. The required for galactolipase activity stretch occupies residues 257 to 279; the sequence is QKNILSTIIDINGIWQGIQDFVA. Histidine 282 functions as the Charge relay system in the catalytic mechanism. Intrachain disulfides connect cysteine 304-cysteine 315 and cysteine 318-cysteine 323. Asparagine 353, asparagine 399, and asparagine 455 each carry an N-linked (GlcNAc...) asparagine glycan. In terms of domain architecture, PLAT spans 357–469; that stretch reads WRYRVSVTLA…ENALQTLYPC (113 aa). A disulfide bond links cysteine 453 and cysteine 469.

Belongs to the AB hydrolase superfamily. Lipase family.

It is found in the secreted. It localises to the zymogen granule membrane. Its subcellular location is the cell projection. The protein localises to the neuron projection. The enzyme catalyses a triacylglycerol + H2O = a diacylglycerol + a fatty acid + H(+). The catalysed reaction is a 1,2-diacyl-3-O-(beta-D-galactosyl)-sn-glycerol + 2 H2O = 3-beta-D-galactosyl-sn-glycerol + 2 a fatty acid + 2 H(+). It catalyses the reaction 1,2,3-tri-(9Z-octadecenoyl)-glycerol + H2O = di-(9Z)-octadecenoylglycerol + (9Z)-octadecenoate + H(+). It carries out the reaction di-(9Z)-octadecenoylglycerol + H2O = (9Z-octadecenoyl)-glycerol + (9Z)-octadecenoate + H(+). The enzyme catalyses (9Z-octadecenoyl)-glycerol + H2O = glycerol + (9Z)-octadecenoate + H(+). The catalysed reaction is 1-(9Z-octadecenoyl)-glycerol + H2O = glycerol + (9Z)-octadecenoate + H(+). It catalyses the reaction 1,2,3-tripropanoylglycerol + H2O = dipropanoylglycerol + propanoate + H(+). It carries out the reaction 1,2,3-tributanoylglycerol + H2O = dibutanoylglycerol + butanoate + H(+). The enzyme catalyses 1,2,3-trioctanoylglycerol + H2O = dioctanoylglycerol + octanoate + H(+). The catalysed reaction is 1,2-didecanoylglycerol + H2O = decanoylglycerol + decanoate + H(+). It catalyses the reaction long chain 1,2-diacyl-3-O-beta-D-galactosyl-sn-glycerol + H2O = long chain acyl-3-O-beta-D-galactosyl-sn-glycerol + a fatty acid + H(+). It carries out the reaction 1,2-dioctanoyl-3-O-beta-D-galactosyl-sn-glycerol + H2O = octanoyl-3-(beta-D-galactosyl)-sn-glycerol + octanoate + H(+). The enzyme catalyses 1,2-didodecanoyl-3-beta-D-galactosyl-sn-glycerol + H2O = dodecanoyl-3-beta-D-galactosyl-sn-glycerol + dodecanoate + H(+). The catalysed reaction is 1-beta-D-galactosyl-2,3-didodecanoyl-sn-glycerol + H2O = 1-beta-D-galactosyl-dodecanoyl-sn-glycerol + dodecanoate + H(+). It catalyses the reaction a 1,2-diacyl-3-O-[alpha-D-galactosyl-(1-&gt;6)-beta-D-galactosyl]-sn-glycerol + H2O = acyl-3-O-[alpha-D-galactosyl-(1-&gt;6)-beta-D-galactosyl]-sn-glycerol + a fatty acid + H(+). It carries out the reaction long chain 1,2-diacyl-3-O-[alpha-D-galactosyl-(1-&gt;6)-beta-D-galactosyl]-sn-glycerol + H2O = long chain acyl-3-O-[alpha-D-galactosyl-(1-&gt;6)-beta-D-galactosyl]-sn-glycerol + a fatty acid + H(+). The enzyme catalyses 1,2-dioctanoyl-3-O-[alpha-D-galactosyl-(1-&gt;6)-beta-D-galactosyl]-sn-glycerol + H2O = octanoyl-3-O-[alpha-D-galactosyl-(1-&gt;6)-beta-D-galactosyl]-sn-glycerol + octanoate + H(+). The catalysed reaction is 1,2-didodecanoyl-3-O-[alpha-D-galactosyl-(1-&gt;6)-beta-D-galactosyl]-sn-glycerol + H2O = dodecanoyl-3-O-[alpha-D-galactosyl-(1-&gt;6)-beta-D-galactosyl]-sn-glycerol + dodecanoate + H(+). It catalyses the reaction a 1,2-diacyl-sn-glycero-3-phosphocholine + H2O = a monoacyl-sn-glycero-3-phosphocholine + a fatty acid + H(+). The protein operates within glycerolipid metabolism; triacylglycerol degradation. It participates in glycolipid metabolism. Its function is as follows. Lipase that primarily hydrolyzes triglycerides and galactosylglycerides. In neonates, may play a major role in pancreatic digestion of dietary fats such as milk fat globules enriched in long-chain triglycerides. Hydrolyzes short-, medium- and long-chain fatty acyls in triglycerides without apparent positional specificity. Can completely deacylate triacylglycerols. When the liver matures and bile salt synthesis increases, likely functions mainly as a galactolipase and monoacylglycerol lipase. Hydrolyzes monogalactosyldiglycerols (MGDG) and digalactosyldiacylglycerols (DGDG) present in a plant-based diet, releasing long-chain polyunsaturated fatty acids. Hydrolyzes medium- and long-chain fatty acyls in galactolipids. May act together with LIPF to hydrolyze partially digested triglycerides. Hydrolyzes long-chain monoglycerides with high efficiency. In cytotoxic T cells, contributes to perforin-dependent cell lysis, but is unlikely to mediate direct cytotoxicity. Also has low phospholipase activity. In neurons, required for the localization of the phospholipid 1-oleoyl-2-palmitoyl-PC (OPPC) to neurite tips through acyl chain remodeling of membrane phospholipids. The resulting OPPC-rich lipid membrane domain recruits the t-SNARE protein STX4 by selectively interacting with the STX4 transmembrane domain and this promotes surface expression of the dopamine transporter SLC6A3/DAT at neurite tips by facilitating fusion of SLC6A3-containing transport vesicles with the plasma membrane. This Bos taurus (Bovine) protein is Pancreatic lipase-related protein 2.